The chain runs to 308 residues: Homoserine kinase (308 aa).

Pro-94 to Thr-104 serves as a coordination point for ATP.

This sequence belongs to the GHMP kinase family. Homoserine kinase subfamily.

The protein localises to the cytoplasm. It catalyses the reaction L-homoserine + ATP = O-phospho-L-homoserine + ADP + H(+). It functions in the pathway amino-acid biosynthesis; L-threonine biosynthesis; L-threonine from L-aspartate: step 4/5. Catalyzes the ATP-dependent phosphorylation of L-homoserine to L-homoserine phosphate. The polypeptide is Homoserine kinase (Crocosphaera subtropica (strain ATCC 51142 / BH68) (Cyanothece sp. (strain ATCC 51142))).